Here is a 293-residue protein sequence, read N- to C-terminus: 4-hydroxy-tetrahydrodipicolinate synthase (293 aa).

A pyruvate-binding site is contributed by Thr44. The active-site Proton donor/acceptor is the Tyr132. The Schiff-base intermediate with substrate role is filled by Lys160. Ile202 provides a ligand contact to pyruvate.

Belongs to the DapA family. Homotetramer; dimer of dimers.

It is found in the cytoplasm. The catalysed reaction is L-aspartate 4-semialdehyde + pyruvate = (2S,4S)-4-hydroxy-2,3,4,5-tetrahydrodipicolinate + H2O + H(+). The protein operates within amino-acid biosynthesis; L-lysine biosynthesis via DAP pathway; (S)-tetrahydrodipicolinate from L-aspartate: step 3/4. Functionally, catalyzes the condensation of (S)-aspartate-beta-semialdehyde [(S)-ASA] and pyruvate to 4-hydroxy-tetrahydrodipicolinate (HTPA). The protein is 4-hydroxy-tetrahydrodipicolinate synthase of Pelagibacter ubique (strain HTCC1062).